A 270-amino-acid polypeptide reads, in one-letter code: Putative phosphoenolpyruvate synthase regulatory protein (270 aa).

An ADP-binding site is contributed by 150 to 157 (GVSRCGKT).

This sequence belongs to the pyruvate, phosphate/water dikinase regulatory protein family. PSRP subfamily.

The enzyme catalyses [pyruvate, water dikinase] + ADP = [pyruvate, water dikinase]-phosphate + AMP + H(+). It catalyses the reaction [pyruvate, water dikinase]-phosphate + phosphate + H(+) = [pyruvate, water dikinase] + diphosphate. Its function is as follows. Bifunctional serine/threonine kinase and phosphorylase involved in the regulation of the phosphoenolpyruvate synthase (PEPS) by catalyzing its phosphorylation/dephosphorylation. This is Putative phosphoenolpyruvate synthase regulatory protein from Shewanella sp. (strain ANA-3).